Here is a 744-residue protein sequence, read N- to C-terminus: Cullin-1 (744 aa).

The 63-residue stretch at 674–736 (DRRYAIDASI…RDYLERDKDN (63 aa)) folds into the Cullin neddylation domain.

The protein belongs to the cullin family. As to quaternary structure, part of a SCF (SKP1-CUL1-F-box protein) E3 ubiquitin-protein ligase complex. Is able to form the SCF complex together with SKP1 and the rice black streaked dwarf virus RBSDV protein P7-2. Interacts with D3. In terms of processing, neddylated (rubylated). Deneddylation occurs upon interaction with the COP9 signalosome (CSN) complex. In terms of tissue distribution, expressed in dry seeds and coleoptiles.

Its function is as follows. Involved in ubiquitination and subsequent proteasomal degradation of target proteins. This Oryza sativa subsp. japonica (Rice) protein is Cullin-1.